A 182-amino-acid polypeptide reads, in one-letter code: Ribosome-recycling factor (182 aa).

A disordered region spans residues 136–156; that stretch reads VKKQEKDGDFSEDQSRDEQDS.

This sequence belongs to the RRF family.

The protein resides in the cytoplasm. Functionally, responsible for the release of ribosomes from messenger RNA at the termination of protein biosynthesis. May increase the efficiency of translation by recycling ribosomes from one round of translation to another. The chain is Ribosome-recycling factor from Synechococcus sp. (strain CC9902).